The chain runs to 1006 residues: Unconventional myosin-Id (1006 aa).

A2 is subject to N-acetylalanine. In terms of domain architecture, Myosin motor spans 9 to 695 (FGKADFVLMD…TLFTLEELRA (687 aa)). 102-109 (GESGAGKT) lines the ATP pocket. At S200 the chain carries Phosphoserine. Phosphotyrosine is present on Y536. The tract at residues 572-594 (MIALVDNLASKEPYYVRCIKPND) is actin-binding. 2 consecutive IQ domains span residues 699–719 (IRIV…MRYK) and 721–741 (TKAA…SYIH). Positions 812 to 1005 (GQRADLGLQR…RSGFILSVPG (194 aa)) constitute a TH1 domain.

The protein belongs to the TRAFAC class myosin-kinesin ATPase superfamily. Myosin family. In terms of assembly, interacts (via the two IQ motifs) with calmodulin. Binds an additional calmodulin chain via a third, C-terminal region. Interacts with F-actin. Expressed in many tissues. Highest levels in brain, followed by lung and ovary; expression is lowest in spleen.

It is found in the cytoplasm. It localises to the perikaryon. Its subcellular location is the cell projection. The protein resides in the dendrite. The protein localises to the early endosome. It is found in the cell cortex. In terms of biological role, unconventional myosin that functions as actin-based motor protein with ATPase activity. Plays a role in endosomal protein trafficking, and especially in the transfer of cargo proteins from early to recycling endosomes. Required for normal planar cell polarity in ciliated tracheal cells, for normal rotational polarity of cilia, and for coordinated, unidirectional ciliary movement in the trachea. Required for normal, polarized cilia organization in brain ependymal epithelial cells. In Homo sapiens (Human), this protein is Unconventional myosin-Id (MYO1D).